The primary structure comprises 157 residues: Nucleoside diphosphate kinase (157 aa).

The ATP site is built by lysine 12, phenylalanine 60, arginine 88, threonine 94, and arginine 105. The Pros-phosphohistidine intermediate role is filled by histidine 121.

The protein belongs to the NDK family. It depends on Mg(2+) as a cofactor.

It localises to the cytoplasm. The enzyme catalyses a 2'-deoxyribonucleoside 5'-diphosphate + ATP = a 2'-deoxyribonucleoside 5'-triphosphate + ADP. It catalyses the reaction a ribonucleoside 5'-diphosphate + ATP = a ribonucleoside 5'-triphosphate + ADP. In terms of biological role, major role in the synthesis of nucleoside triphosphates other than ATP. The ATP gamma phosphate is transferred to the NDP beta phosphate via a ping-pong mechanism, using a phosphorylated active-site intermediate. This is Nucleoside diphosphate kinase from Pyrococcus horikoshii (strain ATCC 700860 / DSM 12428 / JCM 9974 / NBRC 100139 / OT-3).